We begin with the raw amino-acid sequence, 93 residues long: Large ribosomal subunit protein bL31B (93 aa).

This sequence belongs to the bacterial ribosomal protein bL31 family. Type B subfamily. In terms of assembly, part of the 50S ribosomal subunit.

The sequence is that of Large ribosomal subunit protein bL31B from Pseudomonas syringae pv. syringae (strain B728a).